We begin with the raw amino-acid sequence, 526 residues long: Cyclin-L1 (526 aa).

The tract at residues 1 to 36 is disordered; it reads MASGPHSTATAAAAASSAAPSAGGSSSGTTTTTTTT. Cyclin-like stretches follow at residues 88-190 and 203-287; these read ELIQ…RVLK and KIIV…ETLR. Residues 318–526 form a disordered region; sequence KGLNPDGTPA…SRSGHGRHRR (209 aa). The residue at position 325 (Thr-325) is a Phosphothreonine. Ser-335 and Ser-338 each carry phosphoserine. Residues Lys-339 and Lys-347 each participate in a glycyl lysine isopeptide (Lys-Gly) (interchain with G-Cter in SUMO2) cross-link. Basic and acidic residues predominate over residues 342–352; sequence SPREVKAEEKS. Residues Ser-352 and Ser-355 each carry the phosphoserine modification. Residues 361-370 show a composition bias toward basic and acidic residues; the sequence is VKKEPEDRQQ. A Glycyl lysine isopeptide (Lys-Gly) (interchain with G-Cter in SUMO2) cross-link involves residue Lys-362. Phosphoserine is present on Ser-374. Basic residues-rich tracts occupy residues 382-418, 438-452, 460-476, and 486-498; these read DSKR…RRSR, RRHH…KAKH, SNRH…RSQS, and KKHR…HRDR. Residues 390 to 432 form an RS region; the sequence is RSASRSRSRTRSRSRSHTPRRHYNNRRSRSGTYSSRSRSRSRS. Residue Ser-445 is modified to Phosphoserine. The segment covering 499–508 has biased composition (basic and acidic residues); that stretch reads RERSRSFERS. The segment covering 509–526 has biased composition (basic residues); sequence HKSKHHGGSRSGHGRHRR.

Belongs to the cyclin family. Cyclin L subfamily. In terms of assembly, (Microbial infection) Interacts with human herpes virus 1 (HHV-1) transcriptional regulator ICP22. Interacts with POLR2A via its hyperphosphorylated C-terminal domain (CTD). Interacts with CDK11A, CDK12 and CDK13. Isoforms 1 and 2, but not isoform 3, interact with CDK11B. May form a ternary complex with CDK11B and casein kinase II (CKII). Interacts with pre-mRNA-splicing factors, including at least SRSF1, SRSF2 and SRSF7/SLU7. As to expression, widely expressed. Overexpression in primary tumors of head and neck squamous cell carcinomas (HNSCC).

It is found in the nucleus speckle. Its subcellular location is the nucleus. It localises to the nucleoplasm. Functionally, involved in pre-mRNA splicing. Functions in association with cyclin-dependent kinases (CDKs). Inhibited by the CDK-specific inhibitor CDKN1A/p21. May play a role in the regulation of RNA polymerase II (pol II). May be a candidate proto-oncogene in head and neck squamous cell carcinomas (HNSCC). In Homo sapiens (Human), this protein is Cyclin-L1 (CCNL1).